The following is a 369-amino-acid chain: 4-hydroxy-3-methylbut-2-en-1-yl diphosphate synthase (flavodoxin) (369 aa).

Residues Cys270, Cys273, Cys305, and Glu312 each coordinate [4Fe-4S] cluster.

The protein belongs to the IspG family. [4Fe-4S] cluster serves as cofactor.

It catalyses the reaction (2E)-4-hydroxy-3-methylbut-2-enyl diphosphate + oxidized [flavodoxin] + H2O + 2 H(+) = 2-C-methyl-D-erythritol 2,4-cyclic diphosphate + reduced [flavodoxin]. The protein operates within isoprenoid biosynthesis; isopentenyl diphosphate biosynthesis via DXP pathway; isopentenyl diphosphate from 1-deoxy-D-xylulose 5-phosphate: step 5/6. Functionally, converts 2C-methyl-D-erythritol 2,4-cyclodiphosphate (ME-2,4cPP) into 1-hydroxy-2-methyl-2-(E)-butenyl 4-diphosphate. The chain is 4-hydroxy-3-methylbut-2-en-1-yl diphosphate synthase (flavodoxin) from Psychromonas ingrahamii (strain DSM 17664 / CCUG 51855 / 37).